The sequence spans 392 residues: Acetyl-CoA acetyltransferase (392 aa).

Catalysis depends on cysteine 85, which acts as the Acyl-thioester intermediate. Residues cysteine 206, serine 207, valine 209, and lysine 332 each coordinate CoA. Histidine 336 serves as the catalytic Proton acceptor.

The protein belongs to the thiolase-like superfamily. Thiolase family. As to quaternary structure, interacts with HMG-CoA synthase (HMGCS) that catalyzes the second step in the pathway and with a DUF35 protein. The acetoacetyl-CoA thiolase/HMG-CoA synthase complex channels the intermediate via a fused CoA-binding site, which allows for efficient coupling of the endergonic thiolase reaction with the exergonic HMGCS reaction.

It catalyses the reaction 2 acetyl-CoA = acetoacetyl-CoA + CoA. It participates in metabolic intermediate biosynthesis; (R)-mevalonate biosynthesis; (R)-mevalonate from acetyl-CoA: step 1/3. Catalyzes the condensation of two acetyl-coA molecules into acetoacetyl-CoA. Functions in the mevalonate (MVA) pathway leading to isopentenyl diphosphate (IPP), a key precursor for the biosynthesis of isoprenoid compounds that are building blocks of archaeal membrane lipids. In Methanocaldococcus jannaschii (strain ATCC 43067 / DSM 2661 / JAL-1 / JCM 10045 / NBRC 100440) (Methanococcus jannaschii), this protein is Acetyl-CoA acetyltransferase.